A 364-amino-acid chain; its full sequence is Dihydroorotate dehydrogenase (quinone) (364 aa).

FMN is bound by residues 61-65 (AGYDK) and Thr-85. Lys-65 is a binding site for substrate. Residue 110-114 (NRLGF) participates in substrate binding. FMN-binding residues include Asn-139 and Asn-170. Residue Asn-170 coordinates substrate. The active-site Nucleophile is the Ser-173. A substrate-binding site is contributed by Asn-175. Residues Lys-215 and Ser-243 each contribute to the FMN site. 244-245 (NT) contacts substrate. FMN-binding positions include Gly-266, Gly-295, and 316 to 317 (YS).

The protein belongs to the dihydroorotate dehydrogenase family. Type 2 subfamily. In terms of assembly, monomer. FMN is required as a cofactor.

It localises to the cell membrane. It catalyses the reaction (S)-dihydroorotate + a quinone = orotate + a quinol. The protein operates within pyrimidine metabolism; UMP biosynthesis via de novo pathway; orotate from (S)-dihydroorotate (quinone route): step 1/1. Its function is as follows. Catalyzes the conversion of dihydroorotate to orotate with quinone as electron acceptor. In Brucella melitensis biotype 2 (strain ATCC 23457), this protein is Dihydroorotate dehydrogenase (quinone).